The sequence spans 32 residues: Photosystem II reaction center protein Z (32 aa).

Residues 12–32 (FGAAAWIGLVLLVGTLYYFVV) form a helical membrane-spanning segment.

It belongs to the PsbZ family. In terms of assembly, PSII is composed of 1 copy each of membrane proteins PsbA, PsbB, PsbC, PsbD, PsbE, PsbF, PsbH, PsbI, PsbJ, PsbK, PsbL, PsbM, PsbT, PsbY, PsbZ, Psb30/Ycf12, at least 3 peripheral proteins of the oxygen-evolving complex and a large number of cofactors. It forms dimeric complexes.

Its subcellular location is the plastid. It localises to the chloroplast thylakoid membrane. Functionally, may control the interaction of photosystem II (PSII) cores with the light-harvesting antenna, regulates electron flow through the 2 photosystem reaction centers. PSII is a light-driven water plastoquinone oxidoreductase, using light energy to abstract electrons from H(2)O, generating a proton gradient subsequently used for ATP formation. The protein is Photosystem II reaction center protein Z of Euglena granulata.